The primary structure comprises 381 residues: Queuine tRNA-ribosyltransferase (381 aa).

The active-site Proton acceptor is Asp96. Substrate is bound by residues 96–100 (DSGGF), Asp150, Gln193, and Gly220. The RNA binding stretch occupies residues 251-257 (GVGSPDS). The active-site Nucleophile is Asp270. The segment at 275-279 (TRIAR) is RNA binding; important for wobble base 34 recognition. Residues Cys308, Cys310, Cys313, and His339 each coordinate Zn(2+).

Belongs to the queuine tRNA-ribosyltransferase family. As to quaternary structure, homodimer. Within each dimer, one monomer is responsible for RNA recognition and catalysis, while the other monomer binds to the replacement base PreQ1. Zn(2+) is required as a cofactor.

It catalyses the reaction 7-aminomethyl-7-carbaguanine + guanosine(34) in tRNA = 7-aminomethyl-7-carbaguanosine(34) in tRNA + guanine. It functions in the pathway tRNA modification; tRNA-queuosine biosynthesis. Its function is as follows. Catalyzes the base-exchange of a guanine (G) residue with the queuine precursor 7-aminomethyl-7-deazaguanine (PreQ1) at position 34 (anticodon wobble position) in tRNAs with GU(N) anticodons (tRNA-Asp, -Asn, -His and -Tyr). Catalysis occurs through a double-displacement mechanism. The nucleophile active site attacks the C1' of nucleotide 34 to detach the guanine base from the RNA, forming a covalent enzyme-RNA intermediate. The proton acceptor active site deprotonates the incoming PreQ1, allowing a nucleophilic attack on the C1' of the ribose to form the product. After dissociation, two additional enzymatic reactions on the tRNA convert PreQ1 to queuine (Q), resulting in the hypermodified nucleoside queuosine (7-(((4,5-cis-dihydroxy-2-cyclopenten-1-yl)amino)methyl)-7-deazaguanosine). The sequence is that of Queuine tRNA-ribosyltransferase from Bacillus pumilus (strain SAFR-032).